Consider the following 240-residue polypeptide: Probable transcriptional regulatory protein Adeh_2184 (240 aa).

It belongs to the TACO1 family.

The protein localises to the cytoplasm. The sequence is that of Probable transcriptional regulatory protein Adeh_2184 from Anaeromyxobacter dehalogenans (strain 2CP-C).